The sequence spans 289 residues: MASGKEIRGKIKSVENTKKITKAMEMVAASKMRKAQDRMHAARPYSDKIRNIAANLSQANPEYTHPFLVKSDASKTVGFIIVTTDKGLCGGMNTNSLRIVTTKLRELEAEGKKVEAVAIGNKGLGFLNRIGARVVSHAVQIGDTPHLDKLIGPVKVMLDAYQDGKLDAVYVVYTKFINTMKQEPMMEQLLPLAVDKLKADEDSLAWDYIYEPDAQTVIDELLVRYVEALIFQAVAENLASEQSARMVAMKSASDNAGSVISELKLVYNKTRQAAITKELSEIVAGAAAV.

Belongs to the ATPase gamma chain family. In terms of assembly, F-type ATPases have 2 components, CF(1) - the catalytic core - and CF(0) - the membrane proton channel. CF(1) has five subunits: alpha(3), beta(3), gamma(1), delta(1), epsilon(1). CF(0) has three main subunits: a, b and c.

It is found in the cell inner membrane. Produces ATP from ADP in the presence of a proton gradient across the membrane. The gamma chain is believed to be important in regulating ATPase activity and the flow of protons through the CF(0) complex. The polypeptide is ATP synthase gamma chain (Janthinobacterium sp. (strain Marseille) (Minibacterium massiliensis)).